The following is a 145-amino-acid chain: Ventricular natriuretic peptide (145 aa).

The signal sequence occupies residues 1–24; the sequence is MRMGKIAVGYGFLLLLVFQLGVRA. A disulfide bridge connects residues cysteine 117 and cysteine 133.

This sequence belongs to the natriuretic peptide family. In terms of tissue distribution, heart atrium and ventricle, and to a very low extent in brain.

It is found in the secreted. Its function is as follows. Exhibits natriuretic and vasodepressor activity. The sequence is that of Ventricular natriuretic peptide (vnp) from Acipenser transmontanus (White sturgeon).